The sequence spans 261 residues: 5'-nucleotidase SurE (261 aa).

4 residues coordinate a divalent metal cation: D8, D9, S43, and N96.

The protein belongs to the SurE nucleotidase family. A divalent metal cation is required as a cofactor.

The protein resides in the cytoplasm. The catalysed reaction is a ribonucleoside 5'-phosphate + H2O = a ribonucleoside + phosphate. Its function is as follows. Nucleotidase that shows phosphatase activity on nucleoside 5'-monophosphates. The polypeptide is 5'-nucleotidase SurE (Dinoroseobacter shibae (strain DSM 16493 / NCIMB 14021 / DFL 12)).